Here is a 175-residue protein sequence, read N- to C-terminus: NADH-ubiquinone oxidoreductase chain 6 (175 aa).

5 helical membrane passes run 1 to 21, 25 to 45, 47 to 67, 88 to 108, and 149 to 169; these read MMLY…VGFS, SPIY…GIVL, FGGS…MMVV, AVLG…YYVL, and YGTW…VVIM.

The protein belongs to the complex I subunit 6 family. As to quaternary structure, core subunit of respiratory chain NADH dehydrogenase (Complex I) which is composed of 45 different subunits.

It is found in the mitochondrion inner membrane. The enzyme catalyses a ubiquinone + NADH + 5 H(+)(in) = a ubiquinol + NAD(+) + 4 H(+)(out). In terms of biological role, core subunit of the mitochondrial membrane respiratory chain NADH dehydrogenase (Complex I) which catalyzes electron transfer from NADH through the respiratory chain, using ubiquinone as an electron acceptor. Essential for the catalytic activity and assembly of complex I. The sequence is that of NADH-ubiquinone oxidoreductase chain 6 (MT-ND6) from Bos mutus grunniens (Wild yak).